A 610-amino-acid polypeptide reads, in one-letter code: Elongation factor 4 (610 aa).

A tr-type G domain is found at Glu-11–Ser-193. Residues Asp-23 to Thr-28 and Asn-140 to Asp-143 contribute to the GTP site.

The protein belongs to the TRAFAC class translation factor GTPase superfamily. Classic translation factor GTPase family. LepA subfamily.

Its subcellular location is the cell membrane. It catalyses the reaction GTP + H2O = GDP + phosphate + H(+). In terms of biological role, required for accurate and efficient protein synthesis under certain stress conditions. May act as a fidelity factor of the translation reaction, by catalyzing a one-codon backward translocation of tRNAs on improperly translocated ribosomes. Back-translocation proceeds from a post-translocation (POST) complex to a pre-translocation (PRE) complex, thus giving elongation factor G a second chance to translocate the tRNAs correctly. Binds to ribosomes in a GTP-dependent manner. The sequence is that of Elongation factor 4 from Streptococcus equi subsp. zooepidemicus (strain H70).